The following is a 784-amino-acid chain: LPS-assembly protein LptD (784 aa).

A signal peptide spans 1 to 24; the sequence is MKKRIPTLLATMIATALYSQQGLA. 2 cysteine pairs are disulfide-bonded: cysteine 31–cysteine 724 and cysteine 173–cysteine 725.

Belongs to the LptD family. As to quaternary structure, component of the lipopolysaccharide transport and assembly complex. Interacts with LptE and LptA. Post-translationally, contains two intramolecular disulfide bonds.

The protein resides in the cell outer membrane. In terms of biological role, together with LptE, is involved in the assembly of lipopolysaccharide (LPS) at the surface of the outer membrane. The chain is LPS-assembly protein LptD from Shigella sonnei (strain Ss046).